Reading from the N-terminus, the 715-residue chain is uncharacterized protein (715 aa).

Residues 688–708 (VWKFNPALYSTITNIFLLIIF) traverse the membrane as a helical segment.

This sequence belongs to the plectrovirus ORF1 family.

It is found in the host membrane. This is an uncharacterized protein from Spiroplasma virus SpV1-R8A2 B (SpV1).